The chain runs to 504 residues: Protoporphyrinogen oxidase, mitochondrial (504 aa).

FAD-binding positions include 20 to 25, 43 to 44, Lys-51, and 65 to 68; these read GAGVSG, EA, and GANT. A disordered region spans residues 213 to 232; that stretch reads SPKNEKKQGPPKTSANKKRQ. Residues Val-264 and 473 to 475 contribute to the FAD site; that span reads LSV.

This sequence belongs to the protoporphyrinogen/coproporphyrinogen oxidase family. Protoporphyrinogen oxidase subfamily. FAD serves as cofactor.

Its subcellular location is the mitochondrion. The catalysed reaction is protoporphyrinogen IX + 3 O2 = protoporphyrin IX + 3 H2O2. It functions in the pathway porphyrin-containing compound metabolism; protoporphyrin-IX biosynthesis; protoporphyrin-IX from protoporphyrinogen-IX: step 1/1. Its activity is regulated as follows. Inhibited by the herbicide acifluorfen. Its function is as follows. Catalyzes the 6-electron oxidation of protoporphyrinogen-IX to form protoporphyrin-IX. In terms of biological role, provides precursor for the mitochondrial and plastidic heme synthesis and the predominant chlorophyll synthesis in plastids. The chain is Protoporphyrinogen oxidase, mitochondrial (PPXII) from Nicotiana tabacum (Common tobacco).